Consider the following 674-residue polypeptide: DNA ligase (674 aa).

Residues 34–38, 83–84, and Glu117 each bind NAD(+); these read DFEFD and SL. The N6-AMP-lysine intermediate role is filled by Lys119. Positions 140, 184, 297, and 321 each coordinate NAD(+). Residues Cys415, Cys418, Cys433, and Cys439 each contribute to the Zn(2+) site. The region spanning 598–674 is the BRCT domain; sequence LVNTNFEGQS…IDEDEFERML (77 aa).

It belongs to the NAD-dependent DNA ligase family. LigA subfamily. Mg(2+) is required as a cofactor. It depends on Mn(2+) as a cofactor.

It carries out the reaction NAD(+) + (deoxyribonucleotide)n-3'-hydroxyl + 5'-phospho-(deoxyribonucleotide)m = (deoxyribonucleotide)n+m + AMP + beta-nicotinamide D-nucleotide.. DNA ligase that catalyzes the formation of phosphodiester linkages between 5'-phosphoryl and 3'-hydroxyl groups in double-stranded DNA using NAD as a coenzyme and as the energy source for the reaction. It is essential for DNA replication and repair of damaged DNA. This chain is DNA ligase, found in Chlorobaculum parvum (strain DSM 263 / NCIMB 8327) (Chlorobium vibrioforme subsp. thiosulfatophilum).